The chain runs to 498 residues: MGNKWRVLLIVLVLALGGVLAGCKGTDQSSAEGKAGPDSKVKLSWMAILYHQQPPKDRAIKEIEKLTNTELDITWVPDAVKEDRLNAALAAGNLPQIVTIQDIKNSSVMNAFRSGMFWEIGDYIKDYPNLNKMNKLINKNVTIDGKLYGIYRERPLSRQGIVIRKDWLDNLNLKTPKTLDELYEVAKAFTEDDPDKDGKDDTFGLADRNDLIYGAFKTIGSYEGMPTDWKESGGKFTPDFMTQEYKDTMNYMKKLRDNGYMNKDFPVTSKTQQQELFSQGKAGIYIGNMVDAVNLRDHASDKSMKLEIINRIKGPDGKERVWASGGHNGVFAFPKTSVKTEAELKRILAFFDRIAEEDVYSLMTYGIDGVHYNKGEDKTFTRKESQVKDWQTDIQPLSALIAIDKAYLKNTGDPLRTAYEELTEDNEKIIVSNPAESLYSASESERGDELKKIIDDATYKYMIGDITESQFDKEVEKWESSGGKQIIQEYEEAFKQAK.

The signal sequence occupies residues 1–22 (MGNKWRVLLIVLVLALGGVLAG). The N-palmitoyl cysteine moiety is linked to residue C23. A lipid anchor (S-diacylglycerol cysteine) is attached at C23.

This sequence belongs to the bacterial solute-binding protein 1 family. The complex is probably composed of two ATP-binding proteins (MsmX), two transmembrane proteins (YtcP and YteP) and a solute-binding protein (YtcQ).

It localises to the cell membrane. Functionally, involved in pectin degradation. Part of the ABC transporter complex YtcQP-YteP involved in the uptake of polygalacturonan and rhamnogalacturonan type I. This is Polygalacturonan/rhamnogalacturonan-binding protein YtcQ (ytcQ) from Bacillus subtilis (strain 168).